The primary structure comprises 184 residues: Photosystem I assembly protein Ycf4 (184 aa).

Transmembrane regions (helical) follow at residues 22-42 and 57-77; these read FFWA…GTSS and ISFF…LFIS.

Belongs to the Ycf4 family.

It is found in the plastid. It localises to the chloroplast thylakoid membrane. In terms of biological role, seems to be required for the assembly of the photosystem I complex. This chain is Photosystem I assembly protein Ycf4, found in Lemna minor (Common duckweed).